The following is a 1436-amino-acid chain: Probable ATP-dependent RNA helicase spindle-E (1436 aa).

The Helicase ATP-binding domain maps to 124–291 (LAAINANPVV…FTTTNSIPPV (168 aa)). An ATP-binding site is contributed by 137–144 (GETGCGKT). The DEAH box signature appears at 237-240 (DEVH). The Helicase C-terminal domain occupies 337 to 524 (KIIMVIDNME…NSVLRAKELE (188 aa)). In terms of domain architecture, Tudor spans 940 to 1003 (ACDISKGMMV…RFMSEELIQQ (64 aa)).

The protein belongs to the DEAD box helicase family. DEAH subfamily.

The protein localises to the cytoplasm. The catalysed reaction is ATP + H2O = ADP + phosphate + H(+). Probable ATP-binding RNA helicase which plays a central role during spermatogenesis and oogenesis by repressing transposable elements and preventing their mobilization, which is essential for the germline integrity. Acts via the piRNA metabolic process, which mediates the repression of transposable elements during meiosis by forming complexes composed of piRNAs and Piwi and govern the methylation and subsequent repression of transposons. Involved in the repression of LTR retrotransposon copia. Also involved in telomere regulation by repressing specialized telomeric retroelements HeT-A, TAHRE, and TART; Drosophila telomeres being maintained by transposition of specialized telomeric retroelements. Involved in telomeric trans-silencing, a repression mechanism by which a transposon or a transgene inserted in subtelomeric heterochromatin has the capacity to repress in trans in the female germline, a homologous transposon, or transgene located in euchromatin. Involved in the repression of testis-expressed Stellate genes by the homologous Su(Ste) repeats. Required for anteroposterior and dorsoventral axis formation during oogenesis. The sequence is that of Probable ATP-dependent RNA helicase spindle-E (spn-E) from Drosophila yakuba (Fruit fly).